The chain runs to 502 residues: Acetyl-coenzyme A carboxylase carboxyl transferase subunit beta, chloroplastic (502 aa).

Positions 191 to 202 are enriched in low complexity; it reads GSDSESSSIRTS. A disordered region spans residues 191–212; that stretch reads GSDSESSSIRTSGNDSNFNVRE. The region spanning 226-497 is the CoA carboxyltransferase N-terminal domain; that stretch reads LWVQCENCYE…NQNSSGARGS (272 aa). Zn(2+) contacts are provided by C230, C233, C249, and C252. The segment at 230 to 252 adopts a C4-type zinc-finger fold; it reads CENCYELNYRSFFRSKMNICEQC.

This sequence belongs to the AccD/PCCB family. In terms of assembly, acetyl-CoA carboxylase is a heterohexamer composed of biotin carboxyl carrier protein, biotin carboxylase and 2 subunits each of ACCase subunit alpha and ACCase plastid-coded subunit beta (accD). Zn(2+) is required as a cofactor.

The protein localises to the plastid. It is found in the chloroplast stroma. It catalyses the reaction N(6)-carboxybiotinyl-L-lysyl-[protein] + acetyl-CoA = N(6)-biotinyl-L-lysyl-[protein] + malonyl-CoA. It functions in the pathway lipid metabolism; malonyl-CoA biosynthesis; malonyl-CoA from acetyl-CoA: step 1/1. Its function is as follows. Component of the acetyl coenzyme A carboxylase (ACC) complex. Biotin carboxylase (BC) catalyzes the carboxylation of biotin on its carrier protein (BCCP) and then the CO(2) group is transferred by the transcarboxylase to acetyl-CoA to form malonyl-CoA. In Chloranthus spicatus (Chulantree), this protein is Acetyl-coenzyme A carboxylase carboxyl transferase subunit beta, chloroplastic.